A 220-amino-acid polypeptide reads, in one-letter code: 7-cyano-7-deazaguanine synthase 1 (220 aa).

10 to 20 provides a ligand contact to ATP; sequence FSGGIDSTVLL. Zn(2+) contacts are provided by cysteine 183, cysteine 191, cysteine 194, and cysteine 197.

Belongs to the QueC family. As to quaternary structure, homodimer. Zn(2+) is required as a cofactor.

It catalyses the reaction 7-carboxy-7-deazaguanine + NH4(+) + ATP = 7-cyano-7-deazaguanine + ADP + phosphate + H2O + H(+). It participates in purine metabolism; 7-cyano-7-deazaguanine biosynthesis. In terms of biological role, catalyzes the ATP-dependent conversion of 7-carboxy-7-deazaguanine (CDG) to 7-cyano-7-deazaguanine (preQ(0)). This chain is 7-cyano-7-deazaguanine synthase 1, found in Desulfitobacterium hafniense (strain Y51).